A 249-amino-acid polypeptide reads, in one-letter code: Type III pantothenate kinase (249 aa).

6–13 (DCGNSFIK) is an ATP binding site. Residues Y93 and 100–103 (GLDR) contribute to the substrate site. D102 functions as the Proton acceptor in the catalytic mechanism. Residue D122 participates in K(+) binding. T125 is an ATP binding site. T181 is a binding site for substrate.

Belongs to the type III pantothenate kinase family. Homodimer. NH4(+) is required as a cofactor. The cofactor is K(+).

The protein resides in the cytoplasm. The catalysed reaction is (R)-pantothenate + ATP = (R)-4'-phosphopantothenate + ADP + H(+). Its pathway is cofactor biosynthesis; coenzyme A biosynthesis; CoA from (R)-pantothenate: step 1/5. Functionally, catalyzes the phosphorylation of pantothenate (Pan), the first step in CoA biosynthesis. This is Type III pantothenate kinase from Pseudomonas fluorescens (strain SBW25).